Consider the following 115-residue polypeptide: NADH-ubiquinone oxidoreductase chain 3 (115 aa).

3 helical membrane-spanning segments follow: residues 3 to 23 (FVLI…ITFW), 55 to 75 (FFLV…LLPL), and 84 to 104 (LPLM…SLAY).

Belongs to the complex I subunit 3 family. Core subunit of respiratory chain NADH dehydrogenase (Complex I) which is composed of 45 different subunits. Interacts with TMEM186. Interacts with TMEM242.

It is found in the mitochondrion inner membrane. It catalyses the reaction a ubiquinone + NADH + 5 H(+)(in) = a ubiquinol + NAD(+) + 4 H(+)(out). Core subunit of the mitochondrial membrane respiratory chain NADH dehydrogenase (Complex I) which catalyzes electron transfer from NADH through the respiratory chain, using ubiquinone as an electron acceptor. Essential for the catalytic activity of complex I. The polypeptide is NADH-ubiquinone oxidoreductase chain 3 (Pan paniscus (Pygmy chimpanzee)).